Reading from the N-terminus, the 344-residue chain is Phenylalanine--tRNA ligase alpha subunit (344 aa).

Glu255 is a binding site for Mg(2+).

The protein belongs to the class-II aminoacyl-tRNA synthetase family. Phe-tRNA synthetase alpha subunit type 1 subfamily. As to quaternary structure, tetramer of two alpha and two beta subunits. Requires Mg(2+) as cofactor.

It localises to the cytoplasm. The catalysed reaction is tRNA(Phe) + L-phenylalanine + ATP = L-phenylalanyl-tRNA(Phe) + AMP + diphosphate + H(+). The sequence is that of Phenylalanine--tRNA ligase alpha subunit from Persephonella marina (strain DSM 14350 / EX-H1).